We begin with the raw amino-acid sequence, 76 residues long: Translational regulator CsrA (76 aa).

Belongs to the CsrA/RsmA family. In terms of assembly, homodimer; the beta-strands of each monomer intercalate to form a hydrophobic core, while the alpha-helices form wings that extend away from the core.

The protein resides in the cytoplasm. Functionally, a translational regulator that binds mRNA to regulate translation initiation and/or mRNA stability. Usually binds in the 5'-UTR at or near the Shine-Dalgarno sequence preventing ribosome-binding, thus repressing translation. Its main target seems to be the major flagellin gene, while its function is anatagonized by FliW. The protein is Translational regulator CsrA of Pseudothermotoga lettingae (strain ATCC BAA-301 / DSM 14385 / NBRC 107922 / TMO) (Thermotoga lettingae).